The following is a 331-amino-acid chain: Homoserine kinase (331 aa).

This sequence belongs to the pseudomonas-type ThrB family.

The catalysed reaction is L-homoserine + ATP = O-phospho-L-homoserine + ADP + H(+). Its pathway is amino-acid biosynthesis; L-threonine biosynthesis; L-threonine from L-aspartate: step 4/5. In Burkholderia pseudomallei (strain 1710b), this protein is Homoserine kinase.